Here is a 372-residue protein sequence, read N- to C-terminus: Glutamate 5-kinase (372 aa).

K14 lines the ATP pocket. Positions 54, 141, and 153 each coordinate substrate. Residues 173–174 and 215–221 each bind ATP; these read TD and TGGMLTK. The region spanning 280-358 is the PUA domain; it reads AGRLVLDDGA…RDIERLLGYV (79 aa).

It belongs to the glutamate 5-kinase family.

The protein resides in the cytoplasm. The enzyme catalyses L-glutamate + ATP = L-glutamyl 5-phosphate + ADP. It functions in the pathway amino-acid biosynthesis; L-proline biosynthesis; L-glutamate 5-semialdehyde from L-glutamate: step 1/2. Functionally, catalyzes the transfer of a phosphate group to glutamate to form L-glutamate 5-phosphate. The protein is Glutamate 5-kinase of Laribacter hongkongensis (strain HLHK9).